A 782-amino-acid polypeptide reads, in one-letter code: Acetazolamide conferring resistance protein zam (782 aa).

Residues 270–579 (EVALSLESQA…QRLLKLVLTE (310 aa)) enclose the RNB domain. Residues 655–736 (GEIFRGLITG…YRQQIDLGAV (82 aa)) enclose the S1 motif domain. Positions 737–782 (NNAPKDSANMDFDDDDEDGDEREEQDTMDWDAMEDGDDDEGGAVIF) are disordered. Residues 747-782 (DFDDDDEDGDEREEQDTMDWDAMEDGDDDEGGAVIF) show a composition bias toward acidic residues.

The protein belongs to the RNR ribonuclease family.

Not known; control resistance to the carbonic anhydrase inhibitor acetazolamide. The polypeptide is Acetazolamide conferring resistance protein zam (zam) (Synechocystis sp. (strain ATCC 27184 / PCC 6803 / Kazusa)).